Here is a 754-residue protein sequence, read N- to C-terminus: MTILTHTLGFPRVGLRRELKKAQESYWAGNSTREALLAVGRELRARHWEQQKQAGIDLLPVGDFAWYDHVLTTSLLLGNVPARHQNNDGSVDIDTLFRIGRGRAPTGEPAAAAEMTKWFNTNYHYIVPEFSKGQQFRLTWTQLLEEVDEALALGHKIKPVLLGPVTYLWLGKVKGEPFDRLTLLKDILPVYQHVLAELAKRGIEWVQIDEPALVLELPQAWLDAFKPAYDALAGQVKLLLTTYFEGVTPNLDTIIALPVQGLHVDLIHGKDDVAELHQRLPVDWLLSAGLINGRNVWRADLTEKYAQINAIVGKRALWVASSCSLLHSPIDLSVETRLDTEVKSWFAFALQKCGELALLRDALNSGETAALEEWSAPIQARRHSRRVHNAAVEKRLAAITAQDSQRENPYEVRAEAQRARFKLPAWPTTTIGSFPQTTEIRGLRLDFKKGNLDANNYRTGIAEHIKQAIIEQERLGLDVLVHGEAERNDMVEYFGEHLDGFVFTQNGWVQSYGSRCVKPPVVIGDISRPAPITVEWAKYAQSLTDKPVKGMLTGPVTILCWSFPREDVTRETIAKQIALALRDEVADLEAAGIGIIQIDEPALREGLPLRRSDWDAYLEWGVEAFRINAAVAKDETQIHTHMCYCEFNDIMDSIAALDADVITIETSRSDMELLESFEAFDYPNEIGPGVYDIHSPNVPSVEWIEALLKKAAQRIPAQRLWVNPDCGLKTRGWPETRAALANMVKAAHNLRQAK.

5-methyltetrahydropteroyltri-L-glutamate is bound by residues 17 to 20 (RELK) and lysine 117. L-homocysteine contacts are provided by residues 431–433 (IGS) and glutamate 484. Residues 431-433 (IGS) and glutamate 484 each bind L-methionine. Residues 515–516 (RC) and tryptophan 561 each bind 5-methyltetrahydropteroyltri-L-glutamate. Aspartate 599 contributes to the L-homocysteine binding site. Residue aspartate 599 coordinates L-methionine. Position 605 (glutamate 605) interacts with 5-methyltetrahydropteroyltri-L-glutamate. Histidine 641, cysteine 643, and glutamate 665 together coordinate Zn(2+). Histidine 694 (proton donor) is an active-site residue. Position 726 (cysteine 726) interacts with Zn(2+).

The protein belongs to the vitamin-B12 independent methionine synthase family. Zn(2+) is required as a cofactor.

The enzyme catalyses 5-methyltetrahydropteroyltri-L-glutamate + L-homocysteine = tetrahydropteroyltri-L-glutamate + L-methionine. It participates in amino-acid biosynthesis; L-methionine biosynthesis via de novo pathway; L-methionine from L-homocysteine (MetE route): step 1/1. Functionally, catalyzes the transfer of a methyl group from 5-methyltetrahydrofolate to homocysteine resulting in methionine formation. The chain is 5-methyltetrahydropteroyltriglutamate--homocysteine methyltransferase from Salmonella paratyphi B (strain ATCC BAA-1250 / SPB7).